A 284-amino-acid polypeptide reads, in one-letter code: L-ribulose-5-phosphate 3-epimerase UlaE (284 aa).

This sequence belongs to the L-ribulose-5-phosphate 3-epimerase family.

It carries out the reaction L-ribulose 5-phosphate = L-xylulose 5-phosphate. It functions in the pathway cofactor degradation; L-ascorbate degradation; D-xylulose 5-phosphate from L-ascorbate: step 3/4. Functionally, catalyzes the isomerization of L-xylulose-5-phosphate to L-ribulose-5-phosphate. Is involved in the anaerobic L-ascorbate utilization. The polypeptide is L-ribulose-5-phosphate 3-epimerase UlaE (Salmonella typhimurium (strain LT2 / SGSC1412 / ATCC 700720)).